Consider the following 764-residue polypeptide: Palmitoyltransferase AKR1 (764 aa).

Disordered regions lie at residues 1 to 38 and 51 to 71; these read MVNE…GDSN and SGNE…AEED. Residues 1–321 lie on the Cytoplasmic side of the membrane; sequence MVNELENVPR…IKKWFKKSQH (321 aa). A compositionally biased stretch (polar residues) spans 10–27; sequence RASTLTNEEQTVDPSNND. Phosphoserine is present on residues S51 and S57. ANK repeat units lie at residues 72–102, 108–137, 142–171, 175–204, 213–242, and 246–275; these read PLLT…EVNN, EHIT…DVNA, LHAT…DPTM, QGFN…SKGL, KGRT…SIKI, and EGFT…DFFQ. The helical transmembrane segment at 322–341 threads the bilayer; it reads AKLVTFITPFLFLGIAFALF. Topologically, residues 342–346 are lumenal; that stretch reads SHINP. Residues 347 to 364 form a helical membrane-spanning segment; it reads LFVIIVLFLLAIATNKGL. The Cytoplasmic segment spans residues 365-384; the sequence is NKFVLPSYGRMGVHNVTLLR. A helical transmembrane segment spans residues 385–405; the sequence is SPLLSGVFFGTLLWVTIVWFF. At 406 to 418 the chain is on the lumenal side; the sequence is KVMPRTFSDEQYT. A helical membrane pass occupies residues 419–439; the sequence is NILMLVILVSVFYLFGQLVIM. Over 440–513 the chain is Cytoplasmic; the sequence is DPGCLPEETD…FNDVGLKNHK (74 aa). The DHHC domain maps to 470-520; it reads NFCIETWIRKPLRSKFSPLNNAVVARFDHYCPWIFNDVGLKNHKAFIFFIT. C500 acts as the S-palmitoyl cysteine intermediate in catalysis. The helical transmembrane segment at 514–534 threads the bilayer; sequence AFIFFITLMESGIFTFLALCL. The Lumenal portion of the chain corresponds to 535–570; the sequence is EYFDELEDAHEDTSQKNGKCFILGASDLCSGLIYDR. A helical transmembrane segment spans residues 571-591; the sequence is FVFLILLWALLQSIWVASLIF. Over 592–764 the chain is Cytoplasmic; sequence VQAFQICKGM…KDVEQGNDMV (173 aa).

It belongs to the DHHC palmitoyltransferase family. AKR/ZDHHC17 subfamily.

The protein resides in the early endosome membrane. It localises to the golgi apparatus membrane. It catalyses the reaction L-cysteinyl-[protein] + hexadecanoyl-CoA = S-hexadecanoyl-L-cysteinyl-[protein] + CoA. Palmitoyltransferase specific for casein kinase 1. Palmitoylates isoforms YCK1 and YCK2 at both C-terminal cysteine residues, which is required for their proper plasma membrane localization. Required for constitutive endocytosis of a-factor receptor STE3 and both constitutive and pheromone-induced endocytosis of alpha-factor receptor STE2. This is Palmitoyltransferase AKR1 (AKR1) from Saccharomyces cerevisiae (strain ATCC 204508 / S288c) (Baker's yeast).